The chain runs to 376 residues: Methionine import ATP-binding protein MetN 1 (376 aa).

The 240-residue stretch at 34-273 folds into the ABC transporter domain; the sequence is VRFINLGKTY…PQHEVSKTLL (240 aa). 70–77 is a binding site for ATP; sequence GRSGAGKS.

This sequence belongs to the ABC transporter superfamily. Methionine importer (TC 3.A.1.24) family. In terms of assembly, the complex is composed of two ATP-binding proteins (MetN), two transmembrane proteins (MetI) and a solute-binding protein (MetQ).

Its subcellular location is the cell inner membrane. The enzyme catalyses L-methionine(out) + ATP + H2O = L-methionine(in) + ADP + phosphate + H(+). It carries out the reaction D-methionine(out) + ATP + H2O = D-methionine(in) + ADP + phosphate + H(+). Functionally, part of the ABC transporter complex MetNIQ involved in methionine import. Responsible for energy coupling to the transport system. The sequence is that of Methionine import ATP-binding protein MetN 1 from Pseudomonas syringae pv. tomato (strain ATCC BAA-871 / DC3000).